The primary structure comprises 83 residues: Cytochrome b559 subunit alpha (83 aa).

Residues 21-35 (VIHSITIPSLFIAGW) form a helical membrane-spanning segment. Heme is bound at residue H23.

It belongs to the PsbE/PsbF family. Heterodimer of an alpha subunit and a beta subunit. PSII is composed of 1 copy each of membrane proteins PsbA, PsbB, PsbC, PsbD, PsbE, PsbF, PsbH, PsbI, PsbJ, PsbK, PsbL, PsbM, PsbT, PsbX, PsbY, PsbZ, Psb30/Ycf12, at least 3 peripheral proteins of the oxygen-evolving complex and a large number of cofactors. It forms dimeric complexes. It depends on heme b as a cofactor.

The protein resides in the plastid. It is found in the chloroplast thylakoid membrane. Functionally, this b-type cytochrome is tightly associated with the reaction center of photosystem II (PSII). PSII is a light-driven water:plastoquinone oxidoreductase that uses light energy to abstract electrons from H(2)O, generating O(2) and a proton gradient subsequently used for ATP formation. It consists of a core antenna complex that captures photons, and an electron transfer chain that converts photonic excitation into a charge separation. The sequence is that of Cytochrome b559 subunit alpha from Chara vulgaris (Common stonewort).